A 205-amino-acid polypeptide reads, in one-letter code: ATP-dependent Clp protease proteolytic subunit 2 (205 aa).

Residue serine 100 is the Nucleophile of the active site. Residue histidine 125 is part of the active site.

Belongs to the peptidase S14 family. As to quaternary structure, fourteen ClpP subunits assemble into 2 heptameric rings which stack back to back to give a disk-like structure with a central cavity, resembling the structure of eukaryotic proteasomes.

Its subcellular location is the cytoplasm. It catalyses the reaction Hydrolysis of proteins to small peptides in the presence of ATP and magnesium. alpha-casein is the usual test substrate. In the absence of ATP, only oligopeptides shorter than five residues are hydrolyzed (such as succinyl-Leu-Tyr-|-NHMec, and Leu-Tyr-Leu-|-Tyr-Trp, in which cleavage of the -Tyr-|-Leu- and -Tyr-|-Trp bonds also occurs).. In terms of biological role, cleaves peptides in various proteins in a process that requires ATP hydrolysis. Has a chymotrypsin-like activity. Plays a major role in the degradation of misfolded proteins. The protein is ATP-dependent Clp protease proteolytic subunit 2 of Chlamydia abortus (strain DSM 27085 / S26/3) (Chlamydophila abortus).